We begin with the raw amino-acid sequence, 279 residues long: Tumor necrosis factor ligand superfamily member 6 (279 aa).

The Cytoplasmic segment spans residues 1-78 (MQQPMNYPCP…PLKKKDHNTN (78 aa)). The segment at 30-70 (FPCPSCGPRGPDQRRPPPPPPPVSPLPPPSQPLPLPPLTPL) is disordered. Pro residues predominate over residues 45 to 68 (PPPPPPPVSPLPPPSQPLPLPPLT). The helical; Signal-anchor for type II membrane protein transmembrane segment at 79 to 100 (LWLPVVFFMVLVALVGMGLGMY) threads the bilayer. Over 101-279 (QLFHLQKELA…SKTFFGLYKL (179 aa)) the chain is Extracellular. Residue Asn-117 is glycosylated (N-linked (GlcNAc...) asparagine). A compositionally biased stretch (polar residues) spans 126 to 135 (EKQIANPSTP). The segment at 126 to 150 (EKQIANPSTPSEKKEPRSVAHLTGN) is disordered. The THD domain maps to 143–279 (SVAHLTGNPH…SKTFFGLYKL (137 aa)). Asn-182 is a glycosylation site (N-linked (GlcNAc...) asparagine). A disulfide bridge links Cys-200 with Cys-231. Asn-248 and Asn-258 each carry an N-linked (GlcNAc...) asparagine glycan.

It belongs to the tumor necrosis factor family. In terms of assembly, homotrimer. Interacts with ARHGAP9, BAIAP2L1, BTK, CACNB3, CACNB4, CRK, DLG2, DNMBP, DOCK4, EPS8L3, FGR, FYB1, FYN, HCK, ITK, ITSN2, KALRN, LYN, MACC1, MIA, MPP4, MYO15A, NCF1, NCK1, NCK2, NCKIPSD, OSTF1, PIK3R1, PSTPIP1, RIMBP3C, SAMSN1, SH3GL3, SH3PXD2B, SH3PXD2A, SH3RF2, SKAP2, SNX33, SNX9, SORBS3, SPTA1, SRC, SRGAP1, SRGAP2, SRGAP3, TEC, TJP3 and YES1. In terms of processing, the soluble form derives from the membrane form by proteolytic processing. The membrane-bound form undergoes two successive intramembrane proteolytic cleavages. The first one is processed by ADAM10 producing an N-terminal fragment, which lacks the receptor-binding extracellular domain. This ADAM10-processed FasL (FAsL APL) remnant form is still membrane anchored and further processed by SPPL2A that liberates the FasL intracellular domain (FasL ICD). FasL shedding by ADAM10 is a prerequisite for subsequent intramembrane cleavage by SPPL2A in T-cells. Post-translationally, phosphorylated by FGR on tyrosine residues; this is required for ubiquitination and subsequent internalization. N-glycosylated. Glycosylation enhances apoptotic activity. In terms of processing, monoubiquitinated. In terms of tissue distribution, expressed in T-cells. Expressed in natural killer cells.

It localises to the cell membrane. The protein resides in the cytoplasmic vesicle lumen. Its subcellular location is the lysosome lumen. It is found in the secreted. The protein localises to the nucleus. Its function is as follows. Cytokine that binds to TNFRSF6/FAS, a receptor that transduces the apoptotic signal into cells. Involved in cytotoxic T-cell-mediated apoptosis, natural killer cell-mediated apoptosis and in T-cell development. Initiates fratricidal/suicidal activation-induced cell death (AICD) in antigen-activated T-cells contributing to the termination of immune responses. TNFRSF6/FAS-mediated apoptosis also has a role in the induction of peripheral tolerance. Binds to TNFRSF6B/DcR3, a decoy receptor that blocks apoptosis. Functionally, induces FAS-mediated activation of NF-kappa-B, initiating non-apoptotic signaling pathways. Can induce apoptosis but does not appear to be essential for this process. Cytoplasmic form induces gene transcription inhibition. This Mus musculus (Mouse) protein is Tumor necrosis factor ligand superfamily member 6 (Faslg).